Here is a 565-residue protein sequence, read N- to C-terminus: Periplasmic trehalase (565 aa).

The N-terminal stretch at 1–30 is a signal peptide; the sequence is MKSPAPSRPQKMALIPACIFLCFAALSVQA. Substrate is bound by residues Arg152, 159–160, Asn196, 205–207, 277–279, and Gly310; these read WD, RSQ, and RPE. Active-site proton donor/acceptor residues include Asp312 and Glu496. Glu511 serves as a coordination point for substrate. Positions 539–565 are disordered; the sequence is CDNVPATRPLSESTTQPVKPKEAEPTL.

This sequence belongs to the glycosyl hydrolase 37 family. In terms of assembly, monomer.

Its subcellular location is the periplasm. It catalyses the reaction alpha,alpha-trehalose + H2O = alpha-D-glucose + beta-D-glucose. Provides the cells with the ability to utilize trehalose at high osmolarity by splitting it into glucose molecules that can subsequently be taken up by the phosphotransferase-mediated uptake system. This chain is Periplasmic trehalase, found in Shigella dysenteriae serotype 1 (strain Sd197).